We begin with the raw amino-acid sequence, 283 residues long: NAD kinase (283 aa).

D67 serves as the catalytic Proton acceptor. Residues 67–68 (DG), R72, 136–137 (NE), K147, R164, D166, 177–182 (TAYSMS), and Q236 each bind NAD(+).

Belongs to the NAD kinase family. A divalent metal cation serves as cofactor.

The protein localises to the cytoplasm. The enzyme catalyses NAD(+) + ATP = ADP + NADP(+) + H(+). In terms of biological role, involved in the regulation of the intracellular balance of NAD and NADP, and is a key enzyme in the biosynthesis of NADP. Catalyzes specifically the phosphorylation on 2'-hydroxyl of the adenosine moiety of NAD to yield NADP. The sequence is that of NAD kinase from Methanothermobacter thermautotrophicus (strain ATCC 29096 / DSM 1053 / JCM 10044 / NBRC 100330 / Delta H) (Methanobacterium thermoautotrophicum).